A 434-amino-acid polypeptide reads, in one-letter code: Glutamine synthetase leaf isozyme, chloroplastic (434 aa).

2 disordered regions span residues Met-1 to Pro-33 and Thr-101 to Pro-126. The N-terminal 54 residues, Met-1–Ala-54, are a transit peptide targeting the chloroplast. The span at Ala-10 to Gln-25 shows a compositional bias: gly residues. Positions Ile-81–Gly-161 constitute a GS beta-grasp domain. In terms of domain architecture, GS catalytic spans Lys-168–Val-434.

The protein belongs to the glutamine synthetase family. As to quaternary structure, homooctamer.

It is found in the plastid. Its subcellular location is the chloroplast. It catalyses the reaction L-glutamate + NH4(+) + ATP = L-glutamine + ADP + phosphate + H(+). Functionally, the light-modulated chloroplast enzyme, encoded by a nuclear gene and expressed primarily in leaves, is responsible for the reassimilation of the ammonia generated by photorespiration. This chain is Glutamine synthetase leaf isozyme, chloroplastic, found in Hordeum vulgare (Barley).